We begin with the raw amino-acid sequence, 264 residues long: Small ribosomal subunit protein uS3 (264 aa).

Residues 39–107 (VRDFLKKKLK…PVHVNIEEIR (69 aa)) form the KH type-2 domain. Residues 211–264 (NDAPVVEEPQDDRRRRPGRPEGRRREGEGRPGGNRRGGAGAGRRAAPGDAKSGE) are disordered. Residues 221-239 (DDRRRRPGRPEGRRREGEG) are compositionally biased toward basic and acidic residues. A compositionally biased stretch (gly residues) spans 240–251 (RPGGNRRGGAGA).

Belongs to the universal ribosomal protein uS3 family. As to quaternary structure, part of the 30S ribosomal subunit. Forms a tight complex with proteins S10 and S14.

Binds the lower part of the 30S subunit head. Binds mRNA in the 70S ribosome, positioning it for translation. The chain is Small ribosomal subunit protein uS3 from Cupriavidus pinatubonensis (strain JMP 134 / LMG 1197) (Cupriavidus necator (strain JMP 134)).